Here is a 296-residue protein sequence, read N- to C-terminus: uncharacterized protein (296 aa).

The stretch at 129–170 (VKELKDLIRTVADEHMKMKREHEAAMKELTLLINNQKQQQQQ) forms a coiled coil. The tract at residues 165–187 (KQQQQQPVPMPRNSTATRPKNLA) is disordered.

This is an uncharacterized protein from Ostreid herpesvirus 1 (isolate France) (OsHV-1).